The following is a 586-amino-acid chain: Monoterpene synthase TPS4, chloroplastic (586 aa).

Residues 1–47 (MAATRNLSLLAQSSQPWAGIYGSHGSPRPISSWLRRQSIAKTSYICM) constitute a chloroplast transit peptide. Aspartate 340, aspartate 344, aspartate 485, threonine 489, and glutamate 493 together coordinate Mg(2+). Residues 340–344 (DDIFD) carry the DDXXD motif motif.

It belongs to the terpene synthase family. Tpsg subfamily. In terms of assembly, monomer. The cofactor is Mg(2+).

The protein resides in the plastid. Its subcellular location is the chloroplast. The catalysed reaction is (2E)-geranyl diphosphate + H2O = (2E)-geraniol + diphosphate. It participates in secondary metabolite biosynthesis; terpenoid biosynthesis. Monoterpene synthase involved in the biosynthesis of volatile organic compounds. Mediates the conversion of (2E)-geranyl diphosphate (GPP) into the acyclic monoterpene, geraniol. Does not use (2E,6E)-farnesyl diphosphate (FPP) as substrate. The chain is Monoterpene synthase TPS4, chloroplastic from Cananga odorata (Ylang-ylang tree).